We begin with the raw amino-acid sequence, 79 residues long: CDC42 small effector protein 1 (79 aa).

2 S-palmitoyl cysteine lipidation sites follow: Cys-10 and Cys-11. Positions Ile-30 to Gly-43 constitute a CRIB domain. The disordered stretch occupies residues Gly-48–Leu-79. Residues Met-63–Pro-72 are compositionally biased toward basic and acidic residues.

It belongs to the CDC42SE/SPEC family. As to quaternary structure, interacts with CDC42 (in GTP-bound form). Interacts weakly with RAC1 and not at all with RHOA.

The protein resides in the cytoplasm. It is found in the cytoskeleton. It localises to the cell membrane. In terms of biological role, probably involved in the organization of the actin cytoskeleton by acting downstream of CDC42, inducing actin filament assembly. Alters CDC42-induced cell shape changes. In activated T-cells, may play a role in CDC42-mediated F-actin accumulation at the immunological synapse. May play a role in early contractile events in phagocytosis in macrophages. The sequence is that of CDC42 small effector protein 1 (CDC42SE1) from Bos taurus (Bovine).